A 279-amino-acid chain; its full sequence is Thymidylate synthase (279 aa).

Arginine 21 is a dUMP binding site. Histidine 51 contacts (6R)-5,10-methylene-5,6,7,8-tetrahydrofolate. 126-127 is a dUMP binding site; the sequence is RR. Cysteine 159 acts as the Nucleophile in catalysis. DUMP is bound by residues 179-182, asparagine 190, and 220-222; these read RSAD and HLY. Aspartate 182 is a binding site for (6R)-5,10-methylene-5,6,7,8-tetrahydrofolate. A (6R)-5,10-methylene-5,6,7,8-tetrahydrofolate-binding site is contributed by alanine 278.

This sequence belongs to the thymidylate synthase family. Bacterial-type ThyA subfamily. In terms of assembly, homodimer.

It is found in the cytoplasm. It catalyses the reaction dUMP + (6R)-5,10-methylene-5,6,7,8-tetrahydrofolate = 7,8-dihydrofolate + dTMP. It participates in pyrimidine metabolism; dTTP biosynthesis. Its function is as follows. Catalyzes the reductive methylation of 2'-deoxyuridine-5'-monophosphate (dUMP) to 2'-deoxythymidine-5'-monophosphate (dTMP) while utilizing 5,10-methylenetetrahydrofolate (mTHF) as the methyl donor and reductant in the reaction, yielding dihydrofolate (DHF) as a by-product. This enzymatic reaction provides an intracellular de novo source of dTMP, an essential precursor for DNA biosynthesis. This is Thymidylate synthase from Marinobacter nauticus (strain ATCC 700491 / DSM 11845 / VT8) (Marinobacter aquaeolei).